A 2885-amino-acid polypeptide reads, in one-letter code: Chromodomain-helicase-DNA-binding protein 9 (2885 aa).

The interval glutamine 173–glutamine 195 is disordered. Lysine 197 is covalently cross-linked (Glycyl lysine isopeptide (Lys-Gly) (interchain with G-Cter in SUMO2)). 3 disordered regions span residues cysteine 242–serine 263, serine 283–tyrosine 347, and cysteine 479–glutamine 677. 2 stretches are compositionally biased toward polar residues: residues serine 243–serine 263 and serine 283–serine 310. Residues leucine 323–asparagine 334 are compositionally biased toward low complexity. Polar residues-rich tracts occupy residues phenylalanine 335–tyrosine 347 and glutamine 483–arginine 505. Position 498 is an N6-acetyllysine (lysine 498). Basic and acidic residues-rich tracts occupy residues methionine 507–asparagine 526 and alanine 534–isoleucine 544. At serine 549 the chain carries Phosphoserine. Positions lysine 572–lysine 592 are enriched in basic and acidic residues. A Glycyl lysine isopeptide (Lys-Gly) (interchain with G-Cter in SUMO2) cross-link involves residue lysine 595. Serine 610 is modified (phosphoserine). Residues alanine 617–serine 630 show a composition bias toward basic and acidic residues. A compositionally biased stretch (basic residues) spans glutamine 631–lysine 643. Basic and acidic residues predominate over residues tyrosine 644–glycine 659. Chromo domains lie at alanine 689 to alanine 760 and valine 772 to arginine 838. Positions leucine 867 to leucine 871 match the LXXLL motif 1 motif. The Helicase ATP-binding domain maps to leucine 871–leucine 1045. Aspartate 884–threonine 891 contributes to the ATP binding site. Residues aspartate 996–histidine 999 carry the DEAH box motif. Positions leucine 1035–leucine 1039 match the LXXLL motif 2 motif. Residues leucine 1185–arginine 1336 form the Helicase C-terminal domain. The segment at lysine 1460–aspartate 1484 is disordered. The span at alanine 1464–glycine 1473 shows a compositional bias: acidic residues. Phosphoserine occurs at positions 1467 and 1471. Residues glutamate 1474–aspartate 1484 are compositionally biased toward basic and acidic residues. Glycyl lysine isopeptide (Lys-Gly) (interchain with G-Cter in SUMO2) cross-links involve residues lysine 1587, lysine 1737, and lysine 1902. At serine 2025 the chain carries Phosphoserine. The short motif at leucine 2030–leucine 2034 is the LXXLL motif 3 element. Lysine 2037 is covalently cross-linked (Glycyl lysine isopeptide (Lys-Gly) (interchain with G-Cter in SUMO2)). A disordered region spans residues valine 2046–glycine 2238. 2 positions are modified to phosphoserine: serine 2057 and serine 2058. A Glycyl lysine isopeptide (Lys-Gly) (interchain with G-Cter in SUMO2) cross-link involves residue lysine 2073. Serine 2074 and serine 2078 each carry phosphoserine. Over residues valine 2083–lysine 2092 the composition is skewed to polar residues. Positions serine 2093–methionine 2103 are enriched in basic and acidic residues. Positions serine 2127–serine 2193 are enriched in low complexity. A compositionally biased stretch (basic and acidic residues) spans aspartate 2201–aspartate 2215. The span at alanine 2220 to glycine 2238 shows a compositional bias: polar residues. A binds A/T-rich DNA region spans residues glutamine 2331–proline 2471. Glycyl lysine isopeptide (Lys-Gly) (interchain with G-Cter in SUMO2) cross-links involve residues lysine 2349, lysine 2355, and lysine 2360. Positions lysine 2428–arginine 2435 are a.T hook-like. The segment at threonine 2473 to proline 2494 is disordered. Over residues aspartate 2484–proline 2494 the composition is skewed to basic and acidic residues. The short motif at leucine 2710 to leucine 2714 is the LXXLL motif 4 element. Residues alanine 2724–alanine 2770 are disordered. Basic and acidic residues predominate over residues alanine 2728–glutamate 2747. Residues leucine 2782–leucine 2786 carry the LXXLL motif 5 motif. A compositionally biased stretch (basic and acidic residues) spans lysine 2818–glycine 2847. Residues lysine 2818–aspartate 2885 form a disordered region. Lysine 2833 participates in a covalent cross-link: Glycyl lysine isopeptide (Lys-Gly) (interchain with G-Cter in SUMO2). Residues arginine 2864–serine 2876 are compositionally biased toward low complexity.

This sequence belongs to the SNF2/RAD54 helicase family. As to quaternary structure, interacts with PPARA. Probably interacts with ESR1 and NR1I3. In terms of processing, phosphorylated on serine and tyrosine residues. Expressed in osteoprogenitor cells during development and in mature bone (at protein level).

It localises to the cytoplasm. The protein resides in the nucleus. It carries out the reaction ATP + H2O = ADP + phosphate + H(+). Functionally, probable ATP-dependent chromatin-remodeling factor. Acts as a transcriptional coactivator for PPARA and possibly other nuclear receptors. Has DNA-dependent ATPase activity and binds to A/T-rich DNA. Associates with A/T-rich regulatory regions in promoters of genes that participate in the differentiation of progenitors during osteogenesis. The protein is Chromodomain-helicase-DNA-binding protein 9 (Chd9) of Mus musculus (Mouse).